Here is a 303-residue protein sequence, read N- to C-terminus: D-alanine--D-alanine ligase (303 aa).

Residues 102 to 298 (RILLAAAGLP…YPELCDWMVR (197 aa)) enclose the ATP-grasp domain. Residue 128–181 (PLPAPYVIKPVAEGSSVGVEIVRTGDNRRAEIARTWRFGKEALVESFIPGRELT) coordinates ATP. 3 residues coordinate Mg(2+): Asp-251, Glu-265, and Asn-267.

This sequence belongs to the D-alanine--D-alanine ligase family. Requires Mg(2+) as cofactor. Mn(2+) serves as cofactor.

Its subcellular location is the cytoplasm. It carries out the reaction 2 D-alanine + ATP = D-alanyl-D-alanine + ADP + phosphate + H(+). Its pathway is cell wall biogenesis; peptidoglycan biosynthesis. Cell wall formation. The sequence is that of D-alanine--D-alanine ligase from Gluconobacter oxydans (strain 621H) (Gluconobacter suboxydans).